A 90-amino-acid polypeptide reads, in one-letter code: DNA-binding protein HU (90 aa).

The segment at 57–90 is disordered; that stretch reads ARKGVNPQTRKPITIPERKVPKFKPGKALKEKVK.

Belongs to the bacterial histone-like protein family.

Functionally, histone-like DNA-binding protein which is capable of wrapping DNA to stabilize it, and thus to prevent its denaturation under extreme environmental conditions. The polypeptide is DNA-binding protein HU (hup) (Thermotoga maritima (strain ATCC 43589 / DSM 3109 / JCM 10099 / NBRC 100826 / MSB8)).